Consider the following 319-residue polypeptide: 4-hydroxy-3-methylbut-2-enyl diphosphate reductase (319 aa).

Cys12 is a [4Fe-4S] cluster binding site. Residues His41 and His74 each contribute to the (2E)-4-hydroxy-3-methylbut-2-enyl diphosphate site. Positions 41 and 74 each coordinate dimethylallyl diphosphate. Isopentenyl diphosphate contacts are provided by His41 and His74. Cys96 lines the [4Fe-4S] cluster pocket. His124 provides a ligand contact to (2E)-4-hydroxy-3-methylbut-2-enyl diphosphate. His124 is a binding site for dimethylallyl diphosphate. His124 contributes to the isopentenyl diphosphate binding site. Residue Glu126 is the Proton donor of the active site. (2E)-4-hydroxy-3-methylbut-2-enyl diphosphate is bound at residue Thr167. A [4Fe-4S] cluster-binding site is contributed by Cys197. The (2E)-4-hydroxy-3-methylbut-2-enyl diphosphate site is built by Ser225, Ser226, Asn227, and Ser269. Dimethylallyl diphosphate is bound by residues Ser225, Ser226, Asn227, and Ser269. Residues Ser225, Ser226, Asn227, and Ser269 each coordinate isopentenyl diphosphate.

Belongs to the IspH family. In terms of assembly, homodimer. It depends on [4Fe-4S] cluster as a cofactor.

It carries out the reaction isopentenyl diphosphate + 2 oxidized [2Fe-2S]-[ferredoxin] + H2O = (2E)-4-hydroxy-3-methylbut-2-enyl diphosphate + 2 reduced [2Fe-2S]-[ferredoxin] + 2 H(+). The catalysed reaction is dimethylallyl diphosphate + 2 oxidized [2Fe-2S]-[ferredoxin] + H2O = (2E)-4-hydroxy-3-methylbut-2-enyl diphosphate + 2 reduced [2Fe-2S]-[ferredoxin] + 2 H(+). It functions in the pathway isoprenoid biosynthesis; dimethylallyl diphosphate biosynthesis; dimethylallyl diphosphate from (2E)-4-hydroxy-3-methylbutenyl diphosphate: step 1/1. The protein operates within isoprenoid biosynthesis; isopentenyl diphosphate biosynthesis via DXP pathway; isopentenyl diphosphate from 1-deoxy-D-xylulose 5-phosphate: step 6/6. Catalyzes the conversion of 1-hydroxy-2-methyl-2-(E)-butenyl 4-diphosphate (HMBPP) into a mixture of isopentenyl diphosphate (IPP) and dimethylallyl diphosphate (DMAPP). Acts in the terminal step of the DOXP/MEP pathway for isoprenoid precursor biosynthesis. The chain is 4-hydroxy-3-methylbut-2-enyl diphosphate reductase from Buchnera aphidicola subsp. Acyrthosiphon pisum (strain Tuc7).